The primary structure comprises 534 residues: Transcription factor RBF1 (534 aa).

The tract at residues 1 to 36 is disordered; the sequence is MSSNKNQSDLNIPTNSASLKQKQRQQLGIKSEIGAS. The stretch at 77 to 147 forms a coiled coil; it reads AAAAELQHRA…YQQQQQLHQL (71 aa). 4 disordered regions span residues 262 to 285, 353 to 372, 402 to 439, and 477 to 534; these read ANLY…HNEE, QQQQ…QQAA, QLSQ…PHGL, and TQGN…SGFL. The segment covering 267-285 has biased composition (basic and acidic residues); that stretch reads NEKDQKRKNKPDEPGHNEE. Residues 332–386 are a coiled coil; that stretch reads HHLLQQEQQQQQQQQQQQQQQQQQQQQQQHNANSQAQQQAAQLQQQMQQQLQASG. Low complexity predominate over residues 402 to 435; sequence QLSQQQSQQQQLHHIPQQRQRTQSQQSQQQPQQT.

The protein belongs to the RBF1 family.

It is found in the nucleus. It localises to the chromosome. The protein localises to the telomere. Functionally, transcriptional activator that binds to the RPG box and to telomeres. Involved in the regulation of the transition between yeast and filamentous forms and plays a role in virulence. Induces expression of HWP1, a major hyphal cell protein and virulence factor. This is Transcription factor RBF1 (RBF1) from Candida albicans (strain SC5314 / ATCC MYA-2876) (Yeast).